The chain runs to 507 residues: Arabinose import ATP-binding protein AraG (507 aa).

ABC transporter domains follow at residues Leu8–Arg243 and Pro255–Ile499. Position 40–47 (Gly40–Ser47) interacts with ATP.

Belongs to the ABC transporter superfamily. Arabinose importer (TC 3.A.1.2.2) family. In terms of assembly, the complex is composed of two ATP-binding proteins (AraG), two transmembrane proteins (AraH) and a solute-binding protein (AraF).

The protein localises to the cell inner membrane. It catalyses the reaction L-arabinose(out) + ATP + H2O = L-arabinose(in) + ADP + phosphate + H(+). Functionally, part of the ABC transporter complex AraFGH involved in arabinose import. Responsible for energy coupling to the transport system. The chain is Arabinose import ATP-binding protein AraG from Pectobacterium atrosepticum (strain SCRI 1043 / ATCC BAA-672) (Erwinia carotovora subsp. atroseptica).